We begin with the raw amino-acid sequence, 368 residues long: F-box/kelch-repeat protein At2g44700 (368 aa).

Residues 1–23 are disordered; that stretch reads MSSSNEPPRKTDQPSSSSASASA. Residues 14-23 are compositionally biased toward low complexity; that stretch reads PSSSSASASA. The region spanning 25 to 71 is the F-box domain; sequence PSLFLSLPLEIISMILARVPKRYYPILCSVSKNMRSLVRSPEIHKAR. The Kelch repeat unit spans residues 177–221; the sequence is KVYVIGGYQDDEIAAESFDLNTQTWEAAPIPDEKESHRWICKANV.

The protein is F-box/kelch-repeat protein At2g44700 of Arabidopsis thaliana (Mouse-ear cress).